Here is a 370-residue protein sequence, read N- to C-terminus: Propane 2-monooxygenase, reductase component (370 aa).

The span at 1 to 14 (MAPRPLRRHPPLHH) shows a compositional bias: basic residues. The interval 1–21 (MAPRPLRRHPPLHHSFHESRR) is disordered. The 2Fe-2S ferredoxin-type domain maps to 28 to 118 (HRINFEPVDI…DCTIELLNFD (91 aa)). The [2Fe-2S] cluster site is built by Cys62, Cys67, Cys70, and Cys102. The 102-residue stretch at 128–229 (IQDVRTRVTR…TGPYGSFTIK (102 aa)) folds into the FAD-binding FR-type domain.

The protein belongs to the TmoA/XamoA family. The propane 2-monooxygenase multicomponent enzyme system is composed of an electron transfer component and a monooxygenase component interacting with the effector protein PrmD. The electron transfer component is composed of a reductase (PrmB), and the monooxygenase component is formed by a large subunit (PrmA) and a small subunit (PrmC). FAD is required as a cofactor. Requires [2Fe-2S] cluster as cofactor.

Its function is as follows. Reductase component of the propane 2-monooxygenase multicomponent enzyme system which is involved in the degradation of propane via the O2-dependent hydroxylation of propane. Reductase catalyzes the transfer of electrons from NADH or NADPH to monooxygenase. The sequence is that of Propane 2-monooxygenase, reductase component from Rhodococcus jostii (strain RHA1).